Reading from the N-terminus, the 98-residue chain is NADH-ubiquinone oxidoreductase chain 4L (98 aa).

A run of 3 helical transmembrane segments spans residues 2-22, 30-50, and 61-81; these read PFIY…LLLF, LLCL…TTLG, and IILM…LVTI.

This sequence belongs to the complex I subunit 4L family. Core subunit of respiratory chain NADH dehydrogenase (Complex I) which is composed of 45 different subunits.

Its subcellular location is the mitochondrion inner membrane. The enzyme catalyses a ubiquinone + NADH + 5 H(+)(in) = a ubiquinol + NAD(+) + 4 H(+)(out). Its function is as follows. Core subunit of the mitochondrial membrane respiratory chain NADH dehydrogenase (Complex I) which catalyzes electron transfer from NADH through the respiratory chain, using ubiquinone as an electron acceptor. Part of the enzyme membrane arm which is embedded in the lipid bilayer and involved in proton translocation. This Bradypus tridactylus (Pale-throated three-toed sloth) protein is NADH-ubiquinone oxidoreductase chain 4L (MT-ND4L).